Here is a 563-residue protein sequence, read N- to C-terminus: Arginine--tRNA ligase (563 aa).

Positions 108–118 (PNVAKEMHVGH) match the 'HIGH' region motif.

This sequence belongs to the class-I aminoacyl-tRNA synthetase family. As to quaternary structure, monomer.

Its subcellular location is the cytoplasm. The catalysed reaction is tRNA(Arg) + L-arginine + ATP = L-arginyl-tRNA(Arg) + AMP + diphosphate. The polypeptide is Arginine--tRNA ligase (argS) (Pasteurella multocida (strain Pm70)).